Reading from the N-terminus, the 1286-residue chain is DNA-directed RNA polymerase 147 kDa polypeptide (1286 aa).

This sequence belongs to the poxviridae DNA-directed RNA polymerase 147 kDa subunit family. As to quaternary structure, the DNA-dependent RNA polymerase used for intermediate and late genes expression consists of eight subunits Rpo30/OPG66, Rpo7/OPG90, Rpo22/OPG103, Rpo147/OPG105, Rpo18/OPG119, Rpo19/OPG131, Rpo132/OPG151 and Rpo35/OPG156. The same holoenzyme, with the addition of the transcription-specificity factor OPG109, is used for early gene expression.

The protein resides in the virion. The catalysed reaction is RNA(n) + a ribonucleoside 5'-triphosphate = RNA(n+1) + diphosphate. In terms of biological role, part of the DNA-dependent RNA polymerase which catalyzes the transcription of viral DNA into RNA using the four ribonucleoside triphosphates as substrates. Responsible for the transcription of early, intermediate and late genes. DNA-dependent RNA polymerase associates with the early transcription factor (ETF), itself composed of OPG118 and OPG133, thereby allowing the early genes transcription. Late transcription, and probably also intermediate transcription, require newly synthesized RNA polymerase. The chain is DNA-directed RNA polymerase 147 kDa polypeptide (OPG105) from Monkeypox virus.